Consider the following 138-residue polypeptide: uncharacterized protein (138 aa).

This sequence to phage 186 CP81.

This is an uncharacterized protein from Salmonella typhimurium (strain LT2 / SGSC1412 / ATCC 700720).